The sequence spans 644 residues: Subversion of eukaryotic traffic protein A (644 aa).

The segment at 1 to 400 is glucosyltransferase; the sequence is MYKIYSYLGW…FHTLLSQVSD (400 aa). The segment at 401 to 644 is ptdIns(3)P-binding and localization domain; the sequence is PVNPTAHELK…EYDNNHGLRI (244 aa).

In terms of processing, ubiquitinated and polyubiquitinated when ectopically produced in both yeast and mammalian cells; however it is unsure if this modification occurs during the L.pneumophila infection of host cells.

The protein resides in the secreted. Functionally, secreted effector that interferes with vesicular trafficking of host cells. Possesses glucohydrolase and mono-O-glucosyltransferase activity by using UDP-glucose as a sugar donor substrate. Is able to glucosylate histones H4 and H3.1 in vitro, but it is unlikely that histones are the natural substrates for SetA. May glycosylate a component of the host cell vesicle trafficking machinery during L.pneumophila infection. Binds with high specificity to phosphatidylinositol 3-phosphate (PtdIns(3)P), (with a dissociation constant value of 809 nM), which guides SetA to the cytosolic leaflet of the early phagosome of the host cell. The polypeptide is Subversion of eukaryotic traffic protein A (setA) (Legionella pneumophila subsp. pneumophila (strain Philadelphia 1 / ATCC 33152 / DSM 7513)).